The sequence spans 423 residues: MTATSESISAQIEEKAIKAKTAAKSLRLATEKEKNEALAALADHLKQNMSYILTENAKDIEAGRKKGYDAAYIDRLSLNEDRVLDFADGLLEVAELDDPVGETLSSWTLDNGLKAEKVSVPLGVIGMIYEARPNVTVDATGLALKSGNAIVLKGGSSAIHSNTAIVSVMHQALDSTNIPRDAVQFIESTDRSATKQLFKMKEHIDVLIPRGGGALIQEVVENATVPVLETGVGNCHIYIDREADPEKAIDVMINAKTDRPAVCNALETLIVHEKWLEENSAALINALNEHGIQVHGDEKAVQMIPGARPAGEADWQNEYLSLDLAVKVAGSLEEACDHIETYGTKHSEAIITENPETAKAFLNTVDAAALYHNASTRFTDGGALGFGAEIGISTQKLHARGPMGLKELTTCKYIMRGDGHIRR.

This sequence belongs to the gamma-glutamyl phosphate reductase family.

Its subcellular location is the cytoplasm. The enzyme catalyses L-glutamate 5-semialdehyde + phosphate + NADP(+) = L-glutamyl 5-phosphate + NADPH + H(+). Its pathway is amino-acid biosynthesis; L-proline biosynthesis; L-glutamate 5-semialdehyde from L-glutamate: step 2/2. Its function is as follows. Catalyzes the NADPH-dependent reduction of L-glutamate 5-phosphate into L-glutamate 5-semialdehyde and phosphate. The product spontaneously undergoes cyclization to form 1-pyrroline-5-carboxylate. The protein is Gamma-glutamyl phosphate reductase 2 of Bacillus licheniformis (strain ATCC 14580 / DSM 13 / JCM 2505 / CCUG 7422 / NBRC 12200 / NCIMB 9375 / NCTC 10341 / NRRL NRS-1264 / Gibson 46).